Consider the following 465-residue polypeptide: Phosphatidylserine synthase 1 (465 aa).

The Cytoplasmic portion of the chain corresponds to 1–35 (MVSAMRSRTLSKDDVNYKMHFRMINEQQVEDITID). Residues 36–56 (FFYKPHTITLLTFTTVSLMYF) traverse the membrane as a helical segment. Residues 57–68 (AFTRENTSQEDN) lie on the Lumenal side of the membrane. A helical transmembrane segment spans residues 69–89 (IWKGILSVIFFFLIISVLAFP). Residues 90–102 (NGPFTRPHPAIWR) are Cytoplasmic-facing. A helical membrane pass occupies residues 103-123 (MVFGLSVLYFLFLVFLLFLNV). Residues 124 to 186 (EQVKAVMYWL…AMKALLIRSY (63 aa)) lie on the Lumenal side of the membrane. A helical membrane pass occupies residues 187–207 (GLCWTISITWEMTELFFMHLL). Over 208–216 (PNFAECWWD) the chain is Cytoplasmic. Residues 217–237 (QVILDILLCNGGGILLGMVVC) traverse the membrane as a helical segment. Topologically, residues 238–286 (RFLEMRTYHWASFKDIHTTTGKIKRAVLQFTPASWIYVRWFDPKSSFQR) are lumenal. Residues 287–307 (VAGVYLFMIIWQLTELNTFFL) traverse the membrane as a helical segment. At 308–319 (KHIFVFQASHPL) the chain is on the cytoplasmic side. Residues 320 to 342 (SWCRILFIGIITAPTVRQYYAYL) traverse the membrane as a helical segment. At 343–355 (TDTQCKRVGTQCW) the chain is on the lumenal side. The chain crosses the membrane as a helical span at residues 356-376 (VFGAIAFLEATVCIKFGQDLF). Over 377–383 (SKTHLLY) the chain is Cytoplasmic. A helical transmembrane segment spans residues 384 to 404 (VFLWLFSVAVITFLCLYGMVW). Topologically, residues 405-465 (YADYCGQREK…GKVTNGVGKK (61 aa)) are lumenal. The disordered stretch occupies residues 440–465 (PVKQNEGTSRRKNRHKGKVTNGVGKK). Over residues 449–465 (RRKNRHKGKVTNGVGKK) the composition is skewed to basic residues.

The protein belongs to the phosphatidyl serine synthase family.

It localises to the endoplasmic reticulum membrane. The catalysed reaction is a 1,2-diacyl-sn-glycero-3-phosphoethanolamine + L-serine = a 1,2-diacyl-sn-glycero-3-phospho-L-serine + ethanolamine. It carries out the reaction a 1,2-diacyl-sn-glycero-3-phosphocholine + L-serine = a 1,2-diacyl-sn-glycero-3-phospho-L-serine + choline. It participates in phospholipid metabolism; phosphatidylserine biosynthesis. In terms of biological role, catalyzes a base-exchange reaction in which the polar head group of phosphatidylethanolamine (PE) or phosphatidylcholine (PC) is replaced by L-serine. Catalyzes mainly the conversion of phosphatidylcholine but also converts, in vitro and to a lesser extent, phosphatidylethanolamine. This is Phosphatidylserine synthase 1 (ptdss1) from Xenopus tropicalis (Western clawed frog).